Here is a 232-residue protein sequence, read N- to C-terminus: Ribose-5-phosphate isomerase A (232 aa).

Substrate contacts are provided by residues 29 to 32, 86 to 89, and 99 to 102; these read SGST, DGAD, and KGGG. The active-site Proton acceptor is Glu108. Lys126 is a binding site for substrate.

This sequence belongs to the ribose 5-phosphate isomerase family. In terms of assembly, homodimer.

It catalyses the reaction aldehydo-D-ribose 5-phosphate = D-ribulose 5-phosphate. Its pathway is carbohydrate degradation; pentose phosphate pathway; D-ribose 5-phosphate from D-ribulose 5-phosphate (non-oxidative stage): step 1/1. Functionally, catalyzes the reversible conversion of ribose-5-phosphate to ribulose 5-phosphate. This chain is Ribose-5-phosphate isomerase A, found in Synechococcus sp. (strain ATCC 27144 / PCC 6301 / SAUG 1402/1) (Anacystis nidulans).